Consider the following 166-residue polypeptide: MPEFLDIRPLTRSAFAPFGEVIEADPASMRLINGGTTERFHALAAAEAAGEGARVIINLFRGQPRSFPYDVDMMERHPFGSQSFSPISGRPFLVVVSEDEGGRPGKPQVFFARGDQGVNYRRNVWHHPLMALGQTSDFLVVDRDGLGNNLEEFFFETPFVIKEPAP.

Belongs to the ureidoglycolate lyase family. Homodimer. Ni(2+) is required as a cofactor.

It carries out the reaction (S)-ureidoglycolate = urea + glyoxylate. It participates in nitrogen metabolism; (S)-allantoin degradation. Catalyzes the catabolism of the allantoin degradation intermediate (S)-ureidoglycolate, generating urea and glyoxylate. Involved in the utilization of allantoin as nitrogen source. The chain is Ureidoglycolate lyase from Rhizobium etli (strain ATCC 51251 / DSM 11541 / JCM 21823 / NBRC 15573 / CFN 42).